The sequence spans 551 residues: Sodium-dependent high-affinity dicarboxylate transporter 2 (551 aa).

The next 10 membrane-spanning stretches (helical) occupy residues 9–29, 34–54, 82–102, 119–139, 194–214, 243–263, 347–367, 417–437, 449–469, and 497–517; these read LIKKLLVLLGPLVAVPLLFFG, CLFSIIFLSTYWIGEAFPIGV, SIVLFMCTLIMAMAVEATGLH, VMLLGFMCITSFISFFVSDTA, FCKALILACAHASLIGGTAII, WMVFAIPPMFVYLLASYIILV, VSGVLISCILFVWPKDPFDPI, IFVGMSSLPLQLTVTTIIVIM, IFIPISLGVAESMGVHPLYLA, and VISMVEMIVCGFLLNIACILI.

The protein belongs to the SLC13A/DASS transporter (TC 2.A.47) family. NADC subfamily.

The protein localises to the membrane. In terms of biological role, high-affinity sodium-dicarboxylate cotransporter that accepts a range of tricarboxylic acid-cycle intermediates with 4-5 carbon atoms. There is no interaction with monocarboxylates. The polypeptide is Sodium-dependent high-affinity dicarboxylate transporter 2 (nac-2) (Caenorhabditis elegans).